A 530-amino-acid chain; its full sequence is Ataxin-10 homolog (530 aa).

Belongs to the ataxin-10 family.

The protein resides in the cytoplasm. Its function is as follows. May play a role in the regulation of cytokinesis. This Candida glabrata (strain ATCC 2001 / BCRC 20586 / JCM 3761 / NBRC 0622 / NRRL Y-65 / CBS 138) (Yeast) protein is Ataxin-10 homolog (CTR86).